A 721-amino-acid polypeptide reads, in one-letter code: Dipeptidyl-peptidase 5 (721 aa).

The signal sequence occupies residues methionine 1–alanine 18. N-linked (GlcNAc...) asparagine glycosylation is found at asparagine 75, asparagine 94, asparagine 151, and asparagine 254. The segment at alanine 271–proline 297 is disordered. Residues asparagine 380 and asparagine 450 are each glycosylated (N-linked (GlcNAc...) asparagine). The active-site Charge relay system is serine 560. Asparagine 607 carries an N-linked (GlcNAc...) asparagine glycan. Catalysis depends on charge relay system residues aspartate 643 and histidine 675.

The protein belongs to the peptidase S9C family. In terms of processing, N-glycosylated. As to expression, expressed in mycelia and conidia.

The protein resides in the secreted. In terms of biological role, may be involved in metabolism of dipeptides or may affect host defense mechanisms. Has a substrate specificity limited to the hydrolysis of X-Ala, His-Ser, and Ser-Tyr dipeptides at a neutral pH optimum. The chain is Dipeptidyl-peptidase 5 from Aspergillus fumigatus (strain CBS 144.89 / FGSC A1163 / CEA10) (Neosartorya fumigata).